A 2049-amino-acid chain; its full sequence is Kinetochore-associated protein rod-1 (2049 aa).

As to quaternary structure, component of the RZZ complex composed of rod-1, czw-1 and zwl-1. Interacts (via N-terminus) with NDC80 complex component ndc-80.

The protein localises to the chromosome. It is found in the centromere. The protein resides in the kinetochore. Its subcellular location is the cytoplasm. It localises to the cytoskeleton. The protein localises to the spindle. Functionally, essential component of the mitotic checkpoint, which prevents cells from prematurely exiting mitosis. Required for chromosome segregation, the assembly of the dynein-dynactin and mdf-1-mdf-2 complexes onto kinetochores and spindle pole separation. Plays a role in nuclear envelope breakdown. Its function related to the spindle assembly machinery and kinetochore-microtubule attachments likely depends on its association in the mitotic RZZ complex. The RZZ complex recruits the spindly-like protein spdl-1 to kinetochores. To prevent irregular chromosome segregation, the complex also inhibits the attachment of the kinetochore-associated NDC80 complex to microtubules. The recruitment of spdl-1 to kinetochores relieves this inhibition. Required for embryonic development. The polypeptide is Kinetochore-associated protein rod-1 (Caenorhabditis elegans).